The chain runs to 123 residues: Small ribosomal subunit protein uS13 (123 aa).

A disordered region spans residues G95–K123. Over residues Q101 to K123 the composition is skewed to basic residues.

This sequence belongs to the universal ribosomal protein uS13 family. In terms of assembly, part of the 30S ribosomal subunit. Forms a loose heterodimer with protein S19. Forms two bridges to the 50S subunit in the 70S ribosome.

Its function is as follows. Located at the top of the head of the 30S subunit, it contacts several helices of the 16S rRNA. In the 70S ribosome it contacts the 23S rRNA (bridge B1a) and protein L5 of the 50S subunit (bridge B1b), connecting the 2 subunits; these bridges are implicated in subunit movement. Contacts the tRNAs in the A and P-sites. The sequence is that of Small ribosomal subunit protein uS13 from Alkaliphilus metalliredigens (strain QYMF).